The primary structure comprises 550 residues: Glucose-6-phosphate isomerase (550 aa).

Catalysis depends on glutamate 356, which acts as the Proton donor. Active-site residues include histidine 387 and lysine 515.

It belongs to the GPI family.

The protein localises to the cytoplasm. It carries out the reaction alpha-D-glucose 6-phosphate = beta-D-fructose 6-phosphate. It participates in carbohydrate biosynthesis; gluconeogenesis. It functions in the pathway carbohydrate degradation; glycolysis; D-glyceraldehyde 3-phosphate and glycerone phosphate from D-glucose: step 2/4. Functionally, catalyzes the reversible isomerization of glucose-6-phosphate to fructose-6-phosphate. The polypeptide is Glucose-6-phosphate isomerase (Aliivibrio fischeri (strain MJ11) (Vibrio fischeri)).